The chain runs to 198 residues: Glycerol-3-phosphate acyltransferase (198 aa).

A run of 6 helical transmembrane segments spans residues 1-21, 53-73, 79-99, 111-131, 136-156, and 158-178; these read MNLL…GYLA, IIVF…AKYL, WQVA…WLNW, IFLG…IIMI, IVSL…FLSF, and GSNI…LVIW.

This sequence belongs to the PlsY family. In terms of assembly, probably interacts with PlsX.

It localises to the cell inner membrane. It catalyses the reaction an acyl phosphate + sn-glycerol 3-phosphate = a 1-acyl-sn-glycero-3-phosphate + phosphate. It participates in lipid metabolism; phospholipid metabolism. In terms of biological role, catalyzes the transfer of an acyl group from acyl-phosphate (acyl-PO(4)) to glycerol-3-phosphate (G3P) to form lysophosphatidic acid (LPA). This enzyme utilizes acyl-phosphate as fatty acyl donor, but not acyl-CoA or acyl-ACP. The sequence is that of Glycerol-3-phosphate acyltransferase from Prochlorococcus marinus (strain NATL1A).